We begin with the raw amino-acid sequence, 567 residues long: DNA ligase B (567 aa).

Lysine 132 (N6-AMP-lysine intermediate) is an active-site residue.

Belongs to the NAD-dependent DNA ligase family. LigB subfamily.

It carries out the reaction NAD(+) + (deoxyribonucleotide)n-3'-hydroxyl + 5'-phospho-(deoxyribonucleotide)m = (deoxyribonucleotide)n+m + AMP + beta-nicotinamide D-nucleotide.. Functionally, catalyzes the formation of phosphodiester linkages between 5'-phosphoryl and 3'-hydroxyl groups in double-stranded DNA using NAD as a coenzyme and as the energy source for the reaction. The polypeptide is DNA ligase B (Yersinia pseudotuberculosis serotype IB (strain PB1/+)).